Here is a 563-residue protein sequence, read N- to C-terminus: MDTKTLIASEIAKVVPELEQDAIFNLLETPKNSDMGDLAFPAFSLAKVLRKAPQMIASELAEQIDESQFEKVVAVGPYINFFLDKAKISSQVLEQVITAGSDYAQQDEGQGRNVAIDMSSPNIAKPFSIGHLRSTVIGDSLAHIFAKMGYQPVKINHLGDWGKQFGMLIVAYKKWGDEAAVQAHPIDELLKLYVRINAEAETDPTVDEEAREWFRKLEDGDKEATELWQWFRDESLLEFNRLYDQLHVTFDSYNGEAFYNDKMDEVLELLEAKNLLVESKGAQVVNLEKYGIEHPALIKKSDGATLYITRDLAAALYRKRTYDFAKSVYVVGNEQAAHFKQLKAVLQEMGYDWSDDMTHVAFGLVTKGGAKLSTRKGNVILLEPTVAEAINRAASQIEAKNPNLADKEAVAHAVGVGAIKFYDLKTDRMNGYDFDLETMVSFEGETGPYVQYAHARIQSILRKADFTPSATTTYSLADAESWEIIKLIQDFPRIIKRTSDNFEPSIMAKFAINLAQSFNKYYAHTRILDDNSERDNRLALCYATATVLKEALRLLGVDAPNEM.

Positions 121–131 (PNIAKPFSIGH) match the 'HIGH' region motif.

Belongs to the class-I aminoacyl-tRNA synthetase family. As to quaternary structure, monomer.

The protein resides in the cytoplasm. The catalysed reaction is tRNA(Arg) + L-arginine + ATP = L-arginyl-tRNA(Arg) + AMP + diphosphate. In Streptococcus pyogenes serotype M4 (strain MGAS10750), this protein is Arginine--tRNA ligase.